A 1249-amino-acid polypeptide reads, in one-letter code: Cilia- and flagella-associated protein 57 (1249 aa).

WD repeat units follow at residues 105–148 (FQVQ…AIIK), 195–233 (GESS…WETS), 335–374 (SDKQ…ISKG), 386–425 (LHSA…LELY), 427–469 (EYQE…KEYS), 471–506 (RGCK…NINI), 509–548 (GHTG…RETE), and 635–674 (AHAG…GRGI). Coiled-coil stretches lie at residues 690 to 1056 (KTDM…KTDL) and 1094 to 1165 (SDLQ…SALK).

This sequence belongs to the CFAP57 family. May form homodimers. Associates with components of the nexin-dynein regulatory complex (N-DRC) and the CFAP184:CFAP263 complex. As to expression, predominanly expressed in testis, lung and skin. Weak expression in brain and kidney.

Its subcellular location is the cytoplasm. The protein localises to the cytoskeleton. The protein resides in the cilium axoneme. Functionally, associates with components of the nexin-dynein regulatory complex (N-DRC), a key regulator of ciliary/flagellar motility, and might act as an inner dynein arm (IDA) hub or linkage. The polypeptide is Cilia- and flagella-associated protein 57 (Mus musculus (Mouse)).